The sequence spans 849 residues: Protein translocase subunit SecA (849 aa).

Residues glutamine 85, 103 to 107 (GEGKT), and aspartate 493 contribute to the ATP site. The Zn(2+) site is built by cysteine 832, cysteine 834, cysteine 843, and histidine 844.

This sequence belongs to the SecA family. In terms of assembly, monomer and homodimer. Part of the essential Sec protein translocation apparatus which comprises SecA, SecYEG and auxiliary proteins SecDF. Other proteins may also be involved. Zn(2+) serves as cofactor.

The protein resides in the cell membrane. The protein localises to the cytoplasm. The catalysed reaction is ATP + H2O + cellular proteinSide 1 = ADP + phosphate + cellular proteinSide 2.. Part of the Sec protein translocase complex. Interacts with the SecYEG preprotein conducting channel. Has a central role in coupling the hydrolysis of ATP to the transfer of proteins into and across the cell membrane, serving as an ATP-driven molecular motor driving the stepwise translocation of polypeptide chains across the membrane. This Streptococcus thermophilus (strain CNRZ 1066) protein is Protein translocase subunit SecA.